The sequence spans 143 residues: Large ribosomal subunit protein uL15 (143 aa).

Positions 1 to 52 (MELNSIQPADGAKHYKRRVGRGIGSGLGKTSGRGHKGQKSRSGGFHKVGFEG) are disordered. The span at 21–31 (RGIGSGLGKTS) shows a compositional bias: gly residues.

Belongs to the universal ribosomal protein uL15 family. As to quaternary structure, part of the 50S ribosomal subunit.

In terms of biological role, binds to the 23S rRNA. The sequence is that of Large ribosomal subunit protein uL15 from Janthinobacterium sp. (strain Marseille) (Minibacterium massiliensis).